The following is a 151-amino-acid chain: SsrA-binding protein (151 aa).

Residues 124–151 (GKKLHDKRESEKERDWNRQKSRLLKAHG) form a disordered region. Over residues 129–141 (DKRESEKERDWNR) the composition is skewed to basic and acidic residues. A compositionally biased stretch (basic residues) spans 142-151 (QKSRLLKAHG).

Belongs to the SmpB family.

Its subcellular location is the cytoplasm. Functionally, required for rescue of stalled ribosomes mediated by trans-translation. Binds to transfer-messenger RNA (tmRNA), required for stable association of tmRNA with ribosomes. tmRNA and SmpB together mimic tRNA shape, replacing the anticodon stem-loop with SmpB. tmRNA is encoded by the ssrA gene; the 2 termini fold to resemble tRNA(Ala) and it encodes a 'tag peptide', a short internal open reading frame. During trans-translation Ala-aminoacylated tmRNA acts like a tRNA, entering the A-site of stalled ribosomes, displacing the stalled mRNA. The ribosome then switches to translate the ORF on the tmRNA; the nascent peptide is terminated with the 'tag peptide' encoded by the tmRNA and targeted for degradation. The ribosome is freed to recommence translation, which seems to be the essential function of trans-translation. This chain is SsrA-binding protein, found in Rhizobium johnstonii (strain DSM 114642 / LMG 32736 / 3841) (Rhizobium leguminosarum bv. viciae).